The chain runs to 83 residues: Small ribosomal subunit protein eS27 (83 aa).

A C4-type zinc finger spans residues 37-59 (CPGCFNITTVFSHAQTVVICGSC).

This sequence belongs to the eukaryotic ribosomal protein eS27 family. In terms of assembly, component of the small ribosomal subunit (SSU). Mature yeast ribosomes consist of a small (40S) and a large (60S) subunit. The 40S small subunit contains 1 molecule of ribosomal RNA (18S rRNA) and at least 33 different proteins. The large 60S subunit contains 3 rRNA molecules (25S, 5.8S and 5S rRNA) and at least 46 different proteins. Requires Zn(2+) as cofactor.

It localises to the cytoplasm. Component of the ribosome, a large ribonucleoprotein complex responsible for the synthesis of proteins in the cell. The small ribosomal subunit (SSU) binds messenger RNAs (mRNAs) and translates the encoded message by selecting cognate aminoacyl-transfer RNA (tRNA) molecules. The large subunit (LSU) contains the ribosomal catalytic site termed the peptidyl transferase center (PTC), which catalyzes the formation of peptide bonds, thereby polymerizing the amino acids delivered by tRNAs into a polypeptide chain. The nascent polypeptides leave the ribosome through a tunnel in the LSU and interact with protein factors that function in enzymatic processing, targeting, and the membrane insertion of nascent chains at the exit of the ribosomal tunnel. This chain is Small ribosomal subunit protein eS27 (rps27), found in Schizosaccharomyces pombe (strain 972 / ATCC 24843) (Fission yeast).